The following is a 418-amino-acid chain: uncharacterized protein (418 aa).

This is an uncharacterized protein from Escherichia coli (strain K12).